The chain runs to 370 residues: D-alanine--D-alanine ligase (370 aa).

The ATP-grasp domain occupies 144-352; sequence KKIFADAGIP…YSALIERLVD (209 aa). Residue 177-232 participates in ATP binding; the sequence is EEVLTYPVFVKPANLGSSVGISKATNKKELEDAMTEAFLYDRRVVVEQGVVAREIE. Mg(2+) contacts are provided by Asp306, Glu319, and Asn321.

It belongs to the D-alanine--D-alanine ligase family. Mg(2+) is required as a cofactor. It depends on Mn(2+) as a cofactor.

It is found in the cytoplasm. It catalyses the reaction 2 D-alanine + ATP = D-alanyl-D-alanine + ADP + phosphate + H(+). It participates in cell wall biogenesis; peptidoglycan biosynthesis. In terms of biological role, cell wall formation. This Listeria welshimeri serovar 6b (strain ATCC 35897 / DSM 20650 / CCUG 15529 / CIP 8149 / NCTC 11857 / SLCC 5334 / V8) protein is D-alanine--D-alanine ligase.